A 119-amino-acid chain; its full sequence is MKRIAFVFSTTPHGSASGREGLDALLATSALTEETGVFFIGDGVFQILSGQTPDVVLARDYIATFKLLGLYDIEQCWLCAASLRERGLETGASFIVDATPLEPEALRGELDNYDVILRF.

This sequence belongs to the DsrF/TusC family. Heterohexamer, formed by a dimer of trimers. The hexameric TusBCD complex contains 2 copies each of TusB, TusC and TusD. The TusBCD complex interacts with TusE.

The protein localises to the cytoplasm. Its function is as follows. Part of a sulfur-relay system required for 2-thiolation of 5-methylaminomethyl-2-thiouridine (mnm(5)s(2)U) at tRNA wobble positions. The polypeptide is Protein TusC (Citrobacter koseri (strain ATCC BAA-895 / CDC 4225-83 / SGSC4696)).